The chain runs to 349 residues: Secondary metabolism regulator LAE1 (349 aa).

A disordered region spans residues 1-46; the sequence is MSSRNAPSGCVAPSPATAAPPSPTNLRLTVGQSGSESANEPGGEPE. Polar residues predominate over residues 25-38; sequence NLRLTVGQSGSESA.

The protein belongs to the methyltransferase superfamily. LaeA methyltransferase family. Component of the heterotrimeric velvet complex composed of LAE1, VEL1 and VEL2; VEL1 acting as a bridging protein between LAE1 and VEL2.

The protein localises to the nucleus. The enzyme catalyses L-methionyl-[protein] + S-adenosyl-L-methionine = S-methyl-L-methionyl-[protein] + S-adenosyl-L-homocysteine. Its function is as follows. Methyltransferase that performs automethylation. No other methyl-accepting substrate has been identified yet. Component of the velvet transcription factor complex that acts as a global regulator for secondary metabolite gene expression. Controls the expression of the gamma-pentyl-pyrone gene clusters. Required for the expression of cellulase. Regulates asexual sporulation (conidiation) by environmental stimuli such as light and/or mechanical injury. Required for oxidative stress tolerance. Also plays a role in defense and parasitism on other fungi. The chain is Secondary metabolism regulator LAE1 from Hypocrea atroviridis (strain ATCC 20476 / IMI 206040) (Trichoderma atroviride).